The following is a 313-amino-acid chain: Small ribosomal subunit protein uS2 (313 aa).

A compositionally biased stretch (basic and acidic residues) spans 228–256 (RQEDKAAEAQDKDAQDTEDNKGARPRGAE). The disordered stretch occupies residues 228-313 (RQEDKAAEAQ…VSKAGDKPKK (86 aa)).

It belongs to the universal ribosomal protein uS2 family.

The sequence is that of Small ribosomal subunit protein uS2 from Amoebophilus asiaticus (strain 5a2).